Consider the following 109-residue polypeptide: Fluoride-specific ion channel FluC (109 aa).

Helical transmembrane passes span 21-41 (LTLN…GFFV), 52-72 (ILFS…YFLY), and 84-104 (IIFF…GFWI).

It belongs to the fluoride channel Fluc/FEX (TC 1.A.43) family.

The protein resides in the cell inner membrane. The enzyme catalyses fluoride(in) = fluoride(out). Fluoride-specific ion channel. Important for reducing fluoride concentration in the cell, thus reducing its toxicity. This is Fluoride-specific ion channel FluC from Prochlorococcus marinus (strain MIT 9301).